The following is a 388-amino-acid chain: Putative nickel insertion protein (388 aa).

Belongs to the LarC family.

The protein is Putative nickel insertion protein of Geobacter sulfurreducens (strain ATCC 51573 / DSM 12127 / PCA).